We begin with the raw amino-acid sequence, 312 residues long: L-lactate dehydrogenase (312 aa).

NAD(+)-binding residues include Val-14, Asp-35, and Tyr-66. Substrate contacts are provided by residues Gln-83, Arg-90, and 122–125 (NPVD). Residues 120-122 (ASN) and Ser-145 contribute to the NAD(+) site. A substrate-binding site is contributed by 150–153 (DSAR). The active-site Proton acceptor is His-177. Residue Tyr-220 is modified to Phosphotyrosine. Thr-229 is a binding site for substrate.

This sequence belongs to the LDH/MDH superfamily. LDH family. Homotetramer.

It localises to the cytoplasm. The enzyme catalyses (S)-lactate + NAD(+) = pyruvate + NADH + H(+). It functions in the pathway fermentation; pyruvate fermentation to lactate; (S)-lactate from pyruvate: step 1/1. Functionally, catalyzes the conversion of lactate to pyruvate. This is L-lactate dehydrogenase from Mycoplasma pneumoniae (strain ATCC 29342 / M129 / Subtype 1) (Mycoplasmoides pneumoniae).